The following is a 143-amino-acid chain: Small ribosomal subunit protein eS12 (143 aa).

It belongs to the eukaryotic ribosomal protein eS12 family. As to quaternary structure, component of the small ribosomal subunit. Mature ribosomes consist of a small (40S) and a large (60S) subunit. The 40S subunit contains about 32 different proteins and 1 molecule of RNA (18S). The 60S subunit contains 45 different proteins and 3 molecules of RNA (25S, 5.8S and 5S).

It is found in the cytoplasm. Its function is as follows. Component of the ribosome, a large ribonucleoprotein complex responsible for the synthesis of proteins in the cell. The small ribosomal subunit (SSU) binds messenger RNAs (mRNAs) and translates the encoded message by selecting cognate aminoacyl-transfer RNA (tRNA) molecules. The large subunit (LSU) contains the ribosomal catalytic site termed the peptidyl transferase center (PTC), which catalyzes the formation of peptide bonds, thereby polymerizing the amino acids delivered by tRNAs into a polypeptide chain. The nascent polypeptides leave the ribosome through a tunnel in the LSU and interact with protein factors that function in enzymatic processing, targeting, and the membrane insertion of nascent chains at the exit of the ribosomal tunnel. The protein is Small ribosomal subunit protein eS12 (RPS12) of Candida albicans (strain SC5314 / ATCC MYA-2876) (Yeast).